The sequence spans 431 residues: Glucose-1-phosphate adenylyltransferase (431 aa).

Lys39 is a beta-D-fructose 1,6-bisphosphate binding site. AMP-binding residues include Arg40, His46, and Arg52. Tyr114 contacts alpha-D-glucose 1-phosphate. Residue Arg130 coordinates AMP. Alpha-D-glucose 1-phosphate is bound by residues Gly179, Glu194–Lys195, and Ser212. 2 residues coordinate AMP: Glu370 and Arg386. Residues Arg419–Arg423 and Gln429–Arg431 each bind beta-D-fructose 1,6-bisphosphate.

This sequence belongs to the bacterial/plant glucose-1-phosphate adenylyltransferase family. In terms of assembly, homotetramer.

The enzyme catalyses alpha-D-glucose 1-phosphate + ATP + H(+) = ADP-alpha-D-glucose + diphosphate. It participates in glycan biosynthesis; glycogen biosynthesis. Allosterically activated by fructose-1,6-bisphosphate (F16BP) and inhibited by AMP. Functionally, involved in the biosynthesis of ADP-glucose, a building block required for the elongation reactions to produce glycogen. Catalyzes the reaction between ATP and alpha-D-glucose 1-phosphate (G1P) to produce pyrophosphate and ADP-Glc. In Shigella boydii serotype 18 (strain CDC 3083-94 / BS512), this protein is Glucose-1-phosphate adenylyltransferase.